The chain runs to 457 residues: uncharacterized protein (457 aa).

The first 18 residues, 1-18 (MKLLISLLWSIFFSIVYS), serve as a signal peptide directing secretion. At 19–173 (EKTLLNFKHY…GGLPASQFPR (155 aa)) the chain is on the lumenal side. A helical membrane pass occupies residues 174 to 194 (MPISGGITIAYSVILALWMFF). Residues 195–207 (RFQYKHSIVTVQK) lie on the Cytoplasmic side of the membrane. Residues 208 to 228 (AIMFLLIFSCAQQAVTSIVLD) traverse the membrane as a helical segment. Over 229 to 243 (TENLRNRGNFTWLGE) the chain is Lumenal. A helical transmembrane segment spans residues 244–264 (TLVSILFACQLVLDLALLLIL). Residues 265–284 (SWGYTRYSTNMRDRLFTEAK) lie on the Cytoplasmic side of the membrane. Residues 285–305 (IPLIICFFALFVVRFFAITIQ) traverse the membrane as a helical segment. At 306-314 (SIHLGLWFC) the chain is on the lumenal side. The helical transmembrane segment at 315-335 (FFFLTACISALYILFGAFVAL) threads the bilayer. Residues 336 to 358 (PSTLRALVEQRYYTLHSIYKIFR) lie on the Cytoplasmic side of the membrane. The chain crosses the membrane as a helical span at residues 359–379 (IMVLCGVVTIFSFSLVALIFC). Residues 380–457 (SNTNNNSTNK…EEDIRADKSK (78 aa)) lie on the Lumenal side of the membrane.

This sequence belongs to the LU7TM family.

Its subcellular location is the endoplasmic reticulum membrane. This is an uncharacterized protein from Schizosaccharomyces pombe (strain 972 / ATCC 24843) (Fission yeast).